The sequence spans 252 residues: Imidazole glycerol phosphate synthase subunit HisF (252 aa).

Residues aspartate 11 and aspartate 130 contribute to the active site.

It belongs to the HisA/HisF family. Heterodimer of HisH and HisF.

The protein resides in the cytoplasm. It carries out the reaction 5-[(5-phospho-1-deoxy-D-ribulos-1-ylimino)methylamino]-1-(5-phospho-beta-D-ribosyl)imidazole-4-carboxamide + L-glutamine = D-erythro-1-(imidazol-4-yl)glycerol 3-phosphate + 5-amino-1-(5-phospho-beta-D-ribosyl)imidazole-4-carboxamide + L-glutamate + H(+). The protein operates within amino-acid biosynthesis; L-histidine biosynthesis; L-histidine from 5-phospho-alpha-D-ribose 1-diphosphate: step 5/9. In terms of biological role, IGPS catalyzes the conversion of PRFAR and glutamine to IGP, AICAR and glutamate. The HisF subunit catalyzes the cyclization activity that produces IGP and AICAR from PRFAR using the ammonia provided by the HisH subunit. The chain is Imidazole glycerol phosphate synthase subunit HisF from Moorella thermoacetica (strain ATCC 39073 / JCM 9320).